A 119-amino-acid chain; its full sequence is uncharacterized protein (119 aa).

Residues 1-20 form a disordered region; it reads MPHLAAEAHTWPPHISHSTL. Residues 74 to 94 traverse the membrane as a helical segment; sequence LLFVVHQGHIGTGLIVFIICW.

Its subcellular location is the membrane. This is an uncharacterized protein from Saccharomyces cerevisiae (strain ATCC 204508 / S288c) (Baker's yeast).